A 436-amino-acid polypeptide reads, in one-letter code: 3-ketoacyl-CoA thiolase (436 aa).

The Acyl-thioester intermediate role is filled by cysteine 99. Active-site proton acceptor residues include histidine 392 and cysteine 422.

Belongs to the thiolase-like superfamily. Thiolase family. As to quaternary structure, heterotetramer of two alpha chains (FadJ) and two beta chains (FadI).

Its subcellular location is the cytoplasm. It catalyses the reaction an acyl-CoA + acetyl-CoA = a 3-oxoacyl-CoA + CoA. Its pathway is lipid metabolism; fatty acid beta-oxidation. Its function is as follows. Catalyzes the final step of fatty acid oxidation in which acetyl-CoA is released and the CoA ester of a fatty acid two carbons shorter is formed. This chain is 3-ketoacyl-CoA thiolase, found in Escherichia coli O1:K1 / APEC.